A 935-amino-acid chain; its full sequence is Disintegrin and metalloproteinase domain-containing protein 22 (935 aa).

Residues 1–24 (MHINGGPLASWICCVIGSIHLAHA) form the signal peptide. Residues 25-227 (STRPENGGTS…QQTRSQRKKR (203 aa)) constitute a propeptide that is removed on maturation. 2 N-linked (GlcNAc...) asparagine glycosylation sites follow: Asn167 and Asn210. Over 228-736 (QTRRYPRNVE…NRDEGVISTN (509 aa)) the chain is Extracellular. Residues 241 to 440 (KYVELMIVND…GGGACLFNKP (200 aa)) form the Peptidase M12B domain. 17 cysteine pairs are disulfide-bonded: Cys351-Cys435, Cys394-Cys419, Cys396-Cys403, Cys449-Cys479, Cys460-Cys476, Cys462-Cys468, Cys475-Cys496, Cys487-Cys493, Cys492-Cys518, Cys505-Cys525, Cys512-Cys544, Cys537-Cys549, Cys556-Cys607, Cys571-Cys637, Cys585-Cys595, Cys602-Cys665, and Cys659-Cys670. The region spanning 446 to 533 (PPECGNGFVE…QCPANIHKLD (88 aa)) is the Disintegrin domain. An N-linked (GlcNAc...) asparagine glycan is attached at Asn521. N-linked (GlcNAc...) asparagine glycans are attached at residues Asn609 and Asn636. Asn677 is a glycosylation site (N-linked (GlcNAc...) asparagine). Residues 677–713 (NFSTCLGSTNKICSGHGVCSNEVRCICDRFWTGEDCS) enclose the EGF-like domain. 3 cysteine pairs are disulfide-bonded: Cys681/Cys695, Cys689/Cys701, and Cys703/Cys712. The chain crosses the membrane as a helical span at residues 737–757 (IIIGAIAGTILVLALVLGITA). Over 758–935 (WGYKNYRRER…QSARLWETSI (178 aa)) the chain is Cytoplasmic. A disordered region spans residues 850-935 (VSDVCENGRP…QSARLWETSI (86 aa)). Residues 859-870 (PRSNSWQGNVTS) show a composition bias toward polar residues. The segment covering 871–882 (SRKKLRGKRFRP) has biased composition (basic residues). Residues 891 to 906 (SPAKSPSSSTGSIASS) show a composition bias toward low complexity.

In terms of processing, the precursor is cleaved by a furin endopeptidase. In terms of tissue distribution, low levels in adult tissues. Not detected in developing embryos.

The protein localises to the cell membrane. Functionally, probable ligand for integrin in the brain. This is a non catalytic metalloprotease-like protein. This is Disintegrin and metalloproteinase domain-containing protein 22 (adam22) from Xenopus laevis (African clawed frog).